We begin with the raw amino-acid sequence, 129 residues long: Large ribosomal subunit protein uL22 (129 aa).

Belongs to the universal ribosomal protein uL22 family. In terms of assembly, part of the 50S ribosomal subunit.

Functionally, this protein binds specifically to 23S rRNA; its binding is stimulated by other ribosomal proteins, e.g. L4, L17, and L20. It is important during the early stages of 50S assembly. It makes multiple contacts with different domains of the 23S rRNA in the assembled 50S subunit and ribosome. Its function is as follows. The globular domain of the protein is located near the polypeptide exit tunnel on the outside of the subunit, while an extended beta-hairpin is found that lines the wall of the exit tunnel in the center of the 70S ribosome. This Rhizobium meliloti (strain 1021) (Ensifer meliloti) protein is Large ribosomal subunit protein uL22.